Here is a 220-residue protein sequence, read N- to C-terminus: Pro-Pro endopeptidase (220 aa).

A signal peptide spans 1-26 (MRPSKKLLIAIISIFLISSVPVSAHA). An ATLF-like domain is found at 35–220 (KDTLSQIVVF…TYSFLQNLAK (186 aa)). Interacts with substrate peptide regions lie at residues 101 to 103 (KGW) and 117 to 119 (GGS). Position 142 (His142) interacts with Zn(2+). Glu143 serves as the catalytic Proton acceptor. Zn(2+)-binding residues include His146, Tyr178, and Glu185.

It belongs to the peptidase M34 family. Pro-Pro endopeptidase subfamily. In terms of assembly, monomer. Zn(2+) is required as a cofactor.

Its subcellular location is the secreted. It carries out the reaction The enzyme catalyzes the hydrolytic cleavage of peptide bonds between two proline residues.. Its activity is regulated as follows. Is inhibited by the chelating agent o-phenanthroline in vitro. Zinc-dependent endoprotease with a unique preference for proline residues surrounding the scissile bond. Exhibits a high preference for an asparagine at the P2 position and hydrophobic residues (Val, Ile, Leu) at the P3 position. Efficiently cleaves the LPXTG cell surface proteins CD630_28310 and CD630_32460 at multiple cleavage sites in vivo. Has a role in the regulation of C.difficile adhesion versus motility by cleaving surface adhesion proteins such as the collagen binding protein CD630_28310, and is important for efficient infection. Is also able to cleave fibronectin and fibrinogen in vitro; cleaves at the N-terminus of the beta-chain of fibrinogen. Destabilizes the fibronectin network produced by human fibroblasts. Therefore, may be important in key steps of clostridial pathogenesis by degrading extracellular matrix components associated with the gut epithelial cells. To a lesser extent, IgA1, IgA2, and human HSP 90-beta, but not HSP 90-alpha, are also substrates for the enzyme. Is not active on different collagen types, casein and gelatin. This chain is Pro-Pro endopeptidase, found in Clostridioides difficile (strain 630) (Peptoclostridium difficile).